The primary structure comprises 176 residues: Sigma intracellular receptor 2 (176 aa).

The Cytoplasmic portion of the chain corresponds to 1–9 (MGALAARRC). Residues 10–30 (VEWLLGLYFVSHIPITLFIDL) traverse the membrane as a helical segment. One can recognise an EXPERA domain in the interval 10-158 (VEWLLGLYFV…PYLIIPLILL (149 aa)). Topologically, residues 31 to 68 (QAVLPPELYPQEFSNLLRWYSKEFKDPLMQEPPVWFKS) are lumenal. A helical membrane pass occupies residues 69–89 (FLLCELVFQLPFFPIAAYAFF). Residues valine 75 and glutamine 77 each coordinate cholesterol. The Cytoplasmic segment spans residues 90-99 (KGSCRWIRIP). A helical membrane pass occupies residues 100 to 120 (AIIYAAHTITTLIPILYTLLF). The Lumenal portion of the chain corresponds to 121–140 (EDFSKAVAFKGQRPESFRER). A helical transmembrane segment spans residues 141–161 (LTLVGVYAPYLIIPLILLLFM). Topologically, residues 162–176 (LRNPYYKYEEKRKKK) are cytoplasmic. The short motif at 172 to 176 (KRKKK) is the ER retention motif element.

The protein belongs to the TMEM97/sigma-2 receptor family. Homodimer. Interacts with NPC1; the interaction impairs NPC1-mediated cholesterol transport. Interacts with PGRMC1 and LDLR; the interaction increases LDL internalization. Interacts with histatin 1/HTN1; the interaction induces HTN1-stimulating wound healing. Interacts with TSPO.

It is found in the rough endoplasmic reticulum membrane. The protein resides in the nucleus membrane. Its function is as follows. Sigma-2 receptor which contributes to ameliorate dysfunctional cellular processes and slow degenerative progression by regulating cell functions including cholesterol biosynthesis/trafficking, membrane trafficking, autophagy, lipid membrane-bound protein trafficking, and receptor stabilization at the cell surface. Forms a ternary complex with PGRMC1 receptor and low density lipoprotein receptor/LDLR at the plasma membrane, which increases LDLR-mediated LDL cholesterol internalization. Decreases lysosomal sterol transporter NPC1 availability to the cell, probably through NPC1-binding, hence controlling lipid transport, including cholesterol and LBPA, outside of late endosome/lysosome. Binds regio- and stereoselective ligand 20(S)-hydroxycholesterol (20(S)-OHC) which enhances TMEM97-NPC1 interaction and decreases TMEM97-PGRMC1 and TMEM97-TSPO interactions, thereby linking OHC binding to cholesterol homeostasis. Also able to bind cholesterol. Binds histatin 1 (Hst 1)/HN1 salivary peptide at the ER membrane, which is critical for increasing mitochondria-ER contacts and stimulating Hst1 wound healing properties. May alter the activity of some cytochrome P450 proteins. Although shows homologies with sterol isomerases (EXPERA domain), not able to catalyze sterol isomerization. However, may act as sensors of these molecules. Acts as a quality control factor in the ER, promoting the proteolytic degradation of nonproductive and extramitochondrial precursor proteins in the ER membrane thus removing them from the ER surface. This is Sigma intracellular receptor 2 from Mus musculus (Mouse).